The sequence spans 307 residues: Histone deacetylase HDT1 (307 aa).

Over residues 98-112 (EDEMDLDSEDEDEEL) the composition is skewed to acidic residues. The tract at residues 98-280 (EDEMDLDSED…KSGGSVPCKP (183 aa)) is disordered. The segment covering 119–132 (ENGKADEKKQKSQE) has biased composition (basic and acidic residues). Residues 151–197 (DDDSDEDETDDSDEDETDDSDEGLSSEEGDDDSSDEDDTSDDEEEDT) show a composition bias toward acidic residues. Positions 198–211 (PTPKKPEVGKKRPA) are enriched in basic and acidic residues. The segment covering 265–277 (SPKSAPKSGGSVP) has biased composition (low complexity). A C2H2-type; degenerate zinc finger spans residues 276-299 (VPCKPCSKSFISETALQAHSRAKM).

This sequence belongs to the histone deacetylase HD2 family. As to quaternary structure, multimer. Isolated as a trimer composed of 3 proteins of 39, 42 and 45 kDa, possibly a homotrimer with different phosphorylation status or a heterotrimer with HDT2 and/or HDT3. Post-translationally, the N-terminus is blocked. In terms of processing, phosphorylated. Required for enzyme activity.

The protein localises to the nucleus. It is found in the nucleolus. With respect to regulation, inhibited by 3-(4-Aroyl-1-methyl-1H-pyrrol-2-yl)-N-hydroxy-2-propenamides. 3-(1-methyl-4-phenylacetyl-1H-pyrrol-2-yl)-N-hydroxy-2-propenamide 1b and 3-[1-methyl-4-(3-phenyl-2-propenoyl)-1H-pyrrol-2-yl]-N-hydroxy-2-propenamide 1c are very potent inhibitors. Its function is as follows. Mediates the deacetylation of lysine residues on the N-terminal part of the core histones (H2A, H2B, H3 and H4). Histone deacetylation gives a tag for epigenetic repression and plays an important role in transcriptional regulation, cell cycle progression and developmental events. Able to deacetylate all 4 core histones. This chain is Histone deacetylase HDT1 (HDT1), found in Zea mays (Maize).